The following is a 271-amino-acid chain: Small ribosomal subunit protein uS2 (271 aa).

Residues 229-242 (KERKGKDAEEELKK) are compositionally biased toward basic and acidic residues. Residues 229 to 271 (KERKGKDAEEELKKAAAPKAAPAAEAAPAAEAPAAPVVEAAAE) are disordered. A compositionally biased stretch (low complexity) spans 243-271 (AAAPKAAPAAEAAPAAEAPAAPVVEAAAE).

It belongs to the universal ribosomal protein uS2 family.

The polypeptide is Small ribosomal subunit protein uS2 (Nitratidesulfovibrio vulgaris (strain DSM 19637 / Miyazaki F) (Desulfovibrio vulgaris)).